Here is a 266-residue protein sequence, read N- to C-terminus: Apoptosis regulator ced-9 (266 aa).

Residues 1-58 (MVDSMDMANSSQNTFRRRTMATSEMREFLSTKDAEPNNFGMQTIPESPTPSTPTRRMS) form a disordered region. Basic and acidic residues predominate over residues 24–35 (EMREFLSTKDAE). The short motif at 75 to 94 (IQGFVVDYFTYRIAQNGLDW) is the BH4 element. A BH1 motif is present at residues 156–174 (NTPCPMSYGRLIGLISFGG). The short motif at 208 to 223 (SWKEHNRSWADFMKLG) is the BH2 element.

Belongs to the Bcl-2 family. As to quaternary structure, interacts with asymmetric homodimer ced-4; the interaction sequesters ced-4. Interacts with egl-1; the interaction results in ced-4 release. Interacts with dre-1; the interaction inhibits ced-9 activity, either directly or indirectly. Interacts with dct-1. May form a complex composed of ced-9, ced-4 and mac-1.

It is found in the perikaryon. The protein localises to the synapse. It localises to the endomembrane system. The protein resides in the mitochondrion membrane. In terms of biological role, plays a major role in programmed cell death (PCD, apoptosis). egl-1 binds to and directly inhibits the activity of ced-9, releasing the cell death activator ced-4 from a ced-9/ced-4 containing protein complex and allowing ced-4 to activate the cell-killing caspase ced-3. During larval development, required for the elimination of transient presynaptic components downstream of egl-1 and upstream of ced-4 and ced-3 apoptotic pathway. The polypeptide is Apoptosis regulator ced-9 (ced-9) (Caenorhabditis briggsae).